The chain runs to 533 residues: L-aspartate oxidase 1 (533 aa).

FAD is bound by residues 10–13, K32, 39–46, and D214; these read SGLA and ASDWAQGG. Residue R281 is the Proton donor/acceptor of the active site. Residues E366 and 382-383 contribute to the FAD site; that span reads SL.

Belongs to the FAD-dependent oxidoreductase 2 family. NadB subfamily. It depends on FAD as a cofactor.

The protein localises to the cytoplasm. The catalysed reaction is L-aspartate + O2 = iminosuccinate + H2O2. It functions in the pathway cofactor biosynthesis; NAD(+) biosynthesis; iminoaspartate from L-aspartate (oxidase route): step 1/1. Its function is as follows. Catalyzes the oxidation of L-aspartate to iminoaspartate, the first step in the de novo biosynthesis of NAD(+). The protein is L-aspartate oxidase 1 (nadB1) of Ralstonia nicotianae (strain ATCC BAA-1114 / GMI1000) (Ralstonia solanacearum).